The following is a 484-amino-acid chain: MACRGGAGNGHRASATLSRVSPGSLYTCRTRTHNICMVSDFFYPNMGGVESHIYQLSQCLIERGHKVIIVTHAYGNRKGIRYLTSGLKVYYLPLKVMYNQSTATTLFHSLPLLRYIFVRERVTIIHSHSSFSAMAHDALFHAKTMGLQTVFTDHSLFGFADVSSVLTNKLLTVSLCDTNHIICVSYTSKENTVLRAALNPEIVSVIPNAVDPTDFTPDPFRRHDSITIVVVSRLVYRKGIDLLSGIIPELCQKYPDLNFIIGGEGPKRIILEEVRERYQLHDRVRLLGALEHKDVRNVLVQGHIFLNTSLTEAFCMAIVEAASCGLQVVSTRVGGIPEVLPENLIILCEPSVKSLCEGLEKAIFQLKSGTLPAPENIHNIVKTFYTWRNVAERTEKVYDRVSVEAVLPMDKRLDRLISHCGPVTGYIFALLAVFNFLFLIFLRWMTPDSIIDVAIDATGPRGAWTNNYSHSKRGGENNEISETR.

Residues 1 to 421 (MACRGGAGNG…RLDRLISHCG (421 aa)) are Cytoplasmic-facing. Phosphoserine occurs at positions 21 and 24. The chain crosses the membrane as a helical span at residues 422 to 442 (PVTGYIFALLAVFNFLFLIFL). Topologically, residues 443–484 (RWMTPDSIIDVAIDATGPRGAWTNNYSHSKRGGENNEISETR) are lumenal. N-linked (GlcNAc...) asparagine glycosylation occurs at Asn467.

This sequence belongs to the glycosyltransferase group 1 family. Glycosyltransferase 4 subfamily. As to quaternary structure, component of the glycosylphosphatidylinositol-N-acetylglucosaminyltransferase (GPI-GnT) complex composed at least by PIGA, PIGC, PIGH, PIGP, PIGQ, PIGY and DPM2. Interacts with PIGC, PIGH, PIGP, PIGQ and DPM2. Interacts directly with PIGY; this interaction regulates glycosylphosphatidylinositol-N-acetylglucosaminyltransferase activity. Interacts with PIGQ.

It localises to the endoplasmic reticulum membrane. It catalyses the reaction a 1,2-diacyl-sn-glycero-3-phospho-(1D-myo-inositol) + UDP-N-acetyl-alpha-D-glucosamine = a 6-(N-acetyl-alpha-D-glucosaminyl)-1-(1,2-diacyl-sn-glycero-3-phospho)-1D-myo-inositol + UDP + H(+). It functions in the pathway glycolipid biosynthesis; glycosylphosphatidylinositol-anchor biosynthesis. Functionally, catalytic subunit of the glycosylphosphatidylinositol-N-acetylglucosaminyltransferase (GPI-GnT) complex that catalyzes the transfer of N-acetylglucosamine from UDP-N-acetylglucosamine to phosphatidylinositol and participates in the first step of GPI biosynthesis. The polypeptide is Phosphatidylinositol N-acetylglucosaminyltransferase subunit A (Homo sapiens (Human)).